A 314-amino-acid polypeptide reads, in one-letter code: Secreted frizzled-related protein 1 (314 aa).

The N-terminal stretch at M1 to A31 is a signal peptide. An FZ domain is found at T53–M169. Intrachain disulfides connect C58–C121, C68–C114, C105–C140, C129–C166, and C133–C157. The N-linked (GlcNAc...) asparagine glycan is linked to N173. 3 disulfide bridges follow: C186/C256, C189/C258, and C203/C306. One can recognise an NTR domain in the interval C186–C306.

This sequence belongs to the secreted frizzled-related protein (sFRP) family.

It is found in the secreted. In terms of biological role, soluble frizzled-related proteins (sFRPS) function as modulators of Wnt signaling through direct interaction with Wnts. They have a role in regulating cell growth and differentiation in specific cell types. The polypeptide is Secreted frizzled-related protein 1 (SFRP1) (Gallus gallus (Chicken)).